The primary structure comprises 431 residues: Glucose-1-phosphate adenylyltransferase (431 aa).

Residue Lys-39 coordinates beta-D-fructose 1,6-bisphosphate. Residues Arg-40, His-46, and Arg-52 each coordinate AMP. Residue Tyr-114 coordinates alpha-D-glucose 1-phosphate. Arg-130 lines the AMP pocket. Residues Gly-179, 194–195, and Ser-212 contribute to the alpha-D-glucose 1-phosphate site; that span reads EK. AMP is bound by residues Glu-370 and Arg-386. Beta-D-fructose 1,6-bisphosphate-binding positions include 419 to 423 and 429 to 431; these read REMLR and QER.

This sequence belongs to the bacterial/plant glucose-1-phosphate adenylyltransferase family. In terms of assembly, homotetramer.

The catalysed reaction is alpha-D-glucose 1-phosphate + ATP + H(+) = ADP-alpha-D-glucose + diphosphate. Its pathway is glycan biosynthesis; glycogen biosynthesis. With respect to regulation, allosterically activated by fructose-1,6-bisphosphate (F16BP) and inhibited by AMP. Its function is as follows. Involved in the biosynthesis of ADP-glucose, a building block required for the elongation reactions to produce glycogen. Catalyzes the reaction between ATP and alpha-D-glucose 1-phosphate (G1P) to produce pyrophosphate and ADP-Glc. The protein is Glucose-1-phosphate adenylyltransferase of Salmonella arizonae (strain ATCC BAA-731 / CDC346-86 / RSK2980).